The chain runs to 96 residues: Large ribosomal subunit protein uL23 (96 aa).

It belongs to the universal ribosomal protein uL23 family. Part of the 50S ribosomal subunit. Contacts protein L29, and trigger factor when it is bound to the ribosome.

Functionally, one of the early assembly proteins it binds 23S rRNA. One of the proteins that surrounds the polypeptide exit tunnel on the outside of the ribosome. Forms the main docking site for trigger factor binding to the ribosome. The protein is Large ribosomal subunit protein uL23 of Brevibacillus brevis (strain 47 / JCM 6285 / NBRC 100599).